A 256-amino-acid chain; its full sequence is Imidazole glycerol phosphate synthase subunit HisF (256 aa).

Active-site residues include Asp-12 and Asp-131.

This sequence belongs to the HisA/HisF family. As to quaternary structure, heterodimer of HisH and HisF.

The protein resides in the cytoplasm. It catalyses the reaction 5-[(5-phospho-1-deoxy-D-ribulos-1-ylimino)methylamino]-1-(5-phospho-beta-D-ribosyl)imidazole-4-carboxamide + L-glutamine = D-erythro-1-(imidazol-4-yl)glycerol 3-phosphate + 5-amino-1-(5-phospho-beta-D-ribosyl)imidazole-4-carboxamide + L-glutamate + H(+). It functions in the pathway amino-acid biosynthesis; L-histidine biosynthesis; L-histidine from 5-phospho-alpha-D-ribose 1-diphosphate: step 5/9. In terms of biological role, IGPS catalyzes the conversion of PRFAR and glutamine to IGP, AICAR and glutamate. The HisF subunit catalyzes the cyclization activity that produces IGP and AICAR from PRFAR using the ammonia provided by the HisH subunit. In Pseudomonas entomophila (strain L48), this protein is Imidazole glycerol phosphate synthase subunit HisF.